Reading from the N-terminus, the 171-residue chain is 3-hydroxydecanoyl-[acyl-carrier-protein] dehydratase (171 aa).

His-70 is a catalytic residue.

It belongs to the thioester dehydratase family. FabA subfamily. As to quaternary structure, homodimer.

The protein localises to the cytoplasm. It catalyses the reaction a (3R)-hydroxyacyl-[ACP] = a (2E)-enoyl-[ACP] + H2O. The enzyme catalyses (3R)-hydroxydecanoyl-[ACP] = (2E)-decenoyl-[ACP] + H2O. It carries out the reaction (2E)-decenoyl-[ACP] = (3Z)-decenoyl-[ACP]. The protein operates within lipid metabolism; fatty acid biosynthesis. Necessary for the introduction of cis unsaturation into fatty acids. Catalyzes the dehydration of (3R)-3-hydroxydecanoyl-ACP to E-(2)-decenoyl-ACP and then its isomerization to Z-(3)-decenoyl-ACP. Can catalyze the dehydratase reaction for beta-hydroxyacyl-ACPs with saturated chain lengths up to 16:0, being most active on intermediate chain length. This Xanthomonas campestris pv. campestris (strain 8004) protein is 3-hydroxydecanoyl-[acyl-carrier-protein] dehydratase.